The chain runs to 770 residues: Proton-coupled zinc antiporter SLC30A5 (770 aa).

The Cytoplasmic segment spans residues 1-29 (MEEKYSSQALAGGGVLGPVDVPSARLTRY). The helical transmembrane segment at 30–50 (IVLLCFAKFLKAVGLFESYDL) threads the bilayer. Residues 51–53 (LKA) are Lumenal-facing. Residues 54–74 (VHLVQFIFIVKLGSAFFMVLF) traverse the membrane as a helical segment. The Cytoplasmic segment spans residues 75 to 95 (QKPFSSGKVVTKHQWIKIFKH). A helical transmembrane segment spans residues 96–116 (AVVGCIISLLWFFGLTLCGPL). Position 117 (R117) is a topological domain, lumenal. The helical transmembrane segment at 118-138 (TLLLFEHSDVVVLSLLSVLFT) threads the bilayer. At 139-149 (SSGGGPAKTRG) the chain is on the cytoplasmic side. The helical transmembrane segment at 150-170 (AAFFIIAVICLLLFDNDDLMA) threads the bilayer. Over 171–190 (KIAEHPEGHHDSALTHVLYT) the chain is Lumenal. Residues 191–211 (VIAFLGVADHKGGVLLLVLAL) traverse the membrane as a helical segment. Over 212–235 (CCKVGFHMASRKLSVDVGGAKRLQ) the chain is Cytoplasmic. The helical transmembrane segment at 236–256 (ALSHLVSVLLLCPWVIVLSLT) threads the bilayer. Residues 257-264 (TESKVESW) are Lumenal-facing. Residues 265 to 285 (SSLIMPFITVIFFVVILDFYV) form a helical membrane-spanning segment. The Cytoplasmic segment spans residues 286-300 (ESICSVKMESSKCAR). Residues 301 to 321 (YGSFLIFISALLFGNFWTHPI) form a helical membrane-spanning segment. At 322–339 (TDQLRAMNKPAHHESTEH) the chain is on the lumenal side. A helical transmembrane segment spans residues 340–360 (VLSGGVVVSAVFFILSANILS). The Cytoplasmic portion of the chain corresponds to 361–415 (SPSRKGQKGTLIGYSPEGTPLYNFMGDAIQQSSQSLPRFIKESLKQILEEYDSRQ). Residues 416–436 (IFYFLCLNLAFTFVELFYGVW) form a helical membrane-spanning segment. Residues 437–445 (TNSLGLISD) lie on the Lumenal side of the membrane. The helical transmembrane segment at 446-466 (GFHMLFDCSALVMGLFAALMT) threads the bilayer. Positions 448 and 452 each coordinate Zn(2+). Topologically, residues 467 to 480 (RWKATRIFSYGYGR) are cytoplasmic. The helical transmembrane segment at 481–501 (VEILSGFINGLFLMVIAFFVF) threads the bilayer. The Lumenal segment spans residues 502-517 (MESVARLVDPPDIDTN). The helical transmembrane segment at 518–538 (MLTPVSVGGLIVNLVGICAFS) threads the bilayer. Positions 539-579 (HAHSHGASRGGCHSHEHSHSYHGHSHSHGHGHSHNDHGHSH) are his-rich loop; required for zinc transport. Topologically, residues 539 to 597 (HAHSHGASRGGCHSHEHSHSYHGHSHSHGHGHSHNDHGHSHGHSHVSSGGGMNTNMRGV) are cytoplasmic. The tract at residues 548–586 (GGCHSHEHSHSYHGHSHSHGHGHSHNDHGHSHGHSHVSS) is disordered. A compositionally biased stretch (basic residues) spans 558–570 (SYHGHSHSHGHGH). Residues 598-618 (FLHVLADTLGSVGVIVSTTFI) traverse the membrane as a helical segment. Residues H600 and D604 each contribute to the Zn(2+) site. Residues 619-622 (QQFG) lie on the Lumenal side of the membrane. A helical membrane pass occupies residues 623–643 (WLIADPLCSLFIATLIFLSVI). At 644-770 (PLLKDACQVL…KYYKDGTYIM (127 aa)) the chain is on the cytoplasmic side.

It belongs to the cation diffusion facilitator (CDF) transporter (TC 2.A.4) family. SLC30A subfamily. In terms of assembly, heterodimer with SLC30A6/ZNT6; form a functional zinc ion transmembrane transporter.

Its subcellular location is the golgi apparatus. It localises to the golgi stack membrane. The protein localises to the cytoplasmic vesicle. The protein resides in the COPII-coated vesicle membrane. It is found in the secretory vesicle membrane. Its subcellular location is the trans-Golgi network membrane. The enzyme catalyses Zn(2+)(in) + 2 H(+)(out) = Zn(2+)(out) + 2 H(+)(in). Functionally, together with SLC30A6 forms a functional proton-coupled zinc ion antiporter mediating zinc entry into the lumen of organelles along the secretory pathway. By contributing to zinc ion homeostasis within the early secretory pathway, regulates the activation and folding of enzymes like alkaline phosphatases and enzymes involved in phosphatidylinositol glycan anchor biosynthesis. The chain is Proton-coupled zinc antiporter SLC30A5 from Gallus gallus (Chicken).